Consider the following 312-residue polypeptide: Putative S-adenosyl-L-methionine-dependent methyltransferase Mkms_0097 (312 aa).

S-adenosyl-L-methionine-binding positions include Asp-134 and 163–164 (DL).

The protein belongs to the UPF0677 family.

Functionally, exhibits S-adenosyl-L-methionine-dependent methyltransferase activity. In Mycobacterium sp. (strain KMS), this protein is Putative S-adenosyl-L-methionine-dependent methyltransferase Mkms_0097.